The chain runs to 175 residues: Gamma-crystallin B (175 aa).

Beta/gamma crystallin 'Greek key' domains are found at residues 2–40 and 41–83; these read GKIT…RVES and GCWM…HLIP. Residues 84 to 88 are connecting peptide; the sequence is PHSGT. Beta/gamma crystallin 'Greek key' domains lie at 89–129 and 130–172; these read YRMK…NVLE and GSWI…RRVM.

It belongs to the beta/gamma-crystallin family. Monomer.

Crystallins are the dominant structural components of the vertebrate eye lens. The sequence is that of Gamma-crystallin B (CRYGB) from Macaca mulatta (Rhesus macaque).